A 441-amino-acid chain; its full sequence is Protein kinase C and casein kinase substrate in neurons protein 1 (441 aa).

2 positions are modified to phosphoserine: serine 2 and serine 76. The F-BAR domain maps to 10–280 (EEITDSFWEV…AIRGADAQED (271 aa)). Residues 23–272 (KRTVKRIDDG…HVYRELEQAI (250 aa)) adopt a coiled-coil conformation. The residue at position 181 (threonine 181) is a Phosphothreonine. The segment at 297–380 (PQFEEWNPDL…ANGGANPFED (84 aa)) is disordered. Residues 311–321 (AKKEKQPKKAE) are compositionally biased toward basic and acidic residues. Polar residues predominate over residues 324–355 (TLSNATGAVESTSQAGDRGSVSSYDRGQTYAT). 5 positions are modified to phosphoserine: serine 343, serine 345, serine 346, serine 358, and serine 362. Positions 382 to 441 (AKGVRVRALYDYDGQEQDELSFKAGDELTKLGEEDEQGWCRGRLDSGQLGLYPANYVEAI) constitute an SH3 domain. Tyrosine 391 is modified (phosphotyrosine). 2 positions are modified to phosphoserine: serine 402 and serine 427.

Belongs to the PACSIN family. In terms of assembly, homodimer. May form heterooligomers with other PACSINs. Interacts with both COBL and DBNL. Identified in a complex composed of COBL, PACSIN1 and WASL. Interacts with EHD3. Interacts (via SH3 domain) with SYNJ1 and WASL. Interacts (via SH3 domain) with DNM1; the interaction is reduced by DNM1 phosphorylation. Interacts with DNM2 and DNM3. Interacts with MAPT. Interacts with EHD1. Interacts with TRPV4. In terms of processing, phosphorylated by casein kinase 2 (CK2) and protein kinase C (PKC). Highly expressed in brain. Detected in hippocampus and dorsal root ganglion neurons. Detected in rod photoreceptor terminals in the outer plexiform layer of the retina (at protein level). In CNS neurons, high levels in the pyramidal cells of the hippocampus, Purkinje cells of the cerebellum and large neurons of the cortex and brain stem.

The protein resides in the cytoplasm. Its subcellular location is the cell projection. The protein localises to the synapse. It localises to the synaptosome. It is found in the ruffle membrane. The protein resides in the membrane. Its subcellular location is the cytoplasmic vesicle membrane. The protein localises to the cytosol. It localises to the cell membrane. Binds to membranes via its F-BAR domain and mediates membrane tubulation. Plays a role in the reorganization of the microtubule cytoskeleton via its interaction with MAPT; this decreases microtubule stability and inhibits MAPT-induced microtubule polymerization. Plays a role in cellular transport processes by recruiting DNM1, DNM2 and DNM3 to membranes. Plays a role in the reorganization of the actin cytoskeleton and in neuron morphogenesis via its interaction with COBL and WASL, and by recruiting COBL to the cell cortex. Plays a role in the regulation of neurite formation, neurite branching and the regulation of neurite length. Required for normal synaptic vesicle endocytosis; this process retrieves previously released neurotransmitters to accommodate multiple cycles of neurotransmission. Required for normal excitatory and inhibitory synaptic transmission. The protein is Protein kinase C and casein kinase substrate in neurons protein 1 (Pacsin1) of Mus musculus (Mouse).